The primary structure comprises 147 residues: Sec-independent protein translocase protein TatB (147 aa).

Residues 1–21 form a helical membrane-spanning segment; that stretch reads MFDFGFSELIVIAVVTLIVVG. A disordered region spans residues 117-147; it reads APAPMSLAPHGDAASAGREPAAVPGSGPEKA.

The protein belongs to the TatB family. As to quaternary structure, the Tat system comprises two distinct complexes: a TatABC complex, containing multiple copies of TatA, TatB and TatC subunits, and a separate TatA complex, containing only TatA subunits. Substrates initially bind to the TatABC complex, which probably triggers association of the separate TatA complex to form the active translocon.

Its subcellular location is the cell inner membrane. In terms of biological role, part of the twin-arginine translocation (Tat) system that transports large folded proteins containing a characteristic twin-arginine motif in their signal peptide across membranes. Together with TatC, TatB is part of a receptor directly interacting with Tat signal peptides. TatB may form an oligomeric binding site that transiently accommodates folded Tat precursor proteins before their translocation. This is Sec-independent protein translocase protein TatB from Aromatoleum aromaticum (strain DSM 19018 / LMG 30748 / EbN1) (Azoarcus sp. (strain EbN1)).